Consider the following 398-residue polypeptide: Chalcone synthase (398 aa).

Cys-169 is a catalytic residue.

It belongs to the thiolase-like superfamily. Chalcone/stilbene synthases family.

It carries out the reaction (E)-4-coumaroyl-CoA + 3 malonyl-CoA + 3 H(+) = 2',4,4',6'-tetrahydroxychalcone + 3 CO2 + 4 CoA. The protein operates within secondary metabolite biosynthesis; flavonoid biosynthesis. Functionally, the primary product of this enzyme is 4,2',4',6'-tetrahydroxychalcone (also termed naringenin-chalcone or chalcone) which can under specific conditions spontaneously isomerize into naringenin. This chain is Chalcone synthase (CHS), found in Petroselinum crispum (Parsley).